Reading from the N-terminus, the 403-residue chain is Multifunctional CCA protein (403 aa).

2 residues coordinate ATP: glycine 8 and arginine 11. Residues glycine 8 and arginine 11 each contribute to the CTP site. 2 residues coordinate Mg(2+): aspartate 21 and aspartate 23. ATP is bound by residues arginine 91, arginine 137, and arginine 140. CTP contacts are provided by arginine 91, arginine 137, and arginine 140. An HD domain is found at 228 to 329 (TGIHTLMVAK…LKVLGLLDVW (102 aa)).

It belongs to the tRNA nucleotidyltransferase/poly(A) polymerase family. Bacterial CCA-adding enzyme type 1 subfamily. As to quaternary structure, monomer. Can also form homodimers and oligomers. It depends on Mg(2+) as a cofactor. The cofactor is Ni(2+).

The enzyme catalyses a tRNA precursor + 2 CTP + ATP = a tRNA with a 3' CCA end + 3 diphosphate. It catalyses the reaction a tRNA with a 3' CCA end + 2 CTP + ATP = a tRNA with a 3' CCACCA end + 3 diphosphate. In terms of biological role, catalyzes the addition and repair of the essential 3'-terminal CCA sequence in tRNAs without using a nucleic acid template. Adds these three nucleotides in the order of C, C, and A to the tRNA nucleotide-73, using CTP and ATP as substrates and producing inorganic pyrophosphate. tRNA 3'-terminal CCA addition is required both for tRNA processing and repair. Also involved in tRNA surveillance by mediating tandem CCA addition to generate a CCACCA at the 3' terminus of unstable tRNAs. While stable tRNAs receive only 3'-terminal CCA, unstable tRNAs are marked with CCACCA and rapidly degraded. This chain is Multifunctional CCA protein, found in Vibrio cholerae serotype O1 (strain ATCC 39315 / El Tor Inaba N16961).